A 305-amino-acid polypeptide reads, in one-letter code: Sulfate adenylyltransferase subunit 2 (305 aa).

The protein belongs to the PAPS reductase family. CysD subfamily. As to quaternary structure, heterodimer composed of CysD, the smaller subunit, and CysN.

The catalysed reaction is sulfate + ATP + H(+) = adenosine 5'-phosphosulfate + diphosphate. The protein operates within sulfur metabolism; hydrogen sulfide biosynthesis; sulfite from sulfate: step 1/3. In terms of biological role, with CysN forms the ATP sulfurylase (ATPS) that catalyzes the adenylation of sulfate producing adenosine 5'-phosphosulfate (APS) and diphosphate, the first enzymatic step in sulfur assimilation pathway. APS synthesis involves the formation of a high-energy phosphoric-sulfuric acid anhydride bond driven by GTP hydrolysis by CysN coupled to ATP hydrolysis by CysD. The sequence is that of Sulfate adenylyltransferase subunit 2 from Pseudomonas savastanoi pv. phaseolicola (strain 1448A / Race 6) (Pseudomonas syringae pv. phaseolicola (strain 1448A / Race 6)).